An 82-amino-acid polypeptide reads, in one-letter code: UPF0291 protein LJ_1507 (82 aa).

The tract at residues 61–82 is disordered; the sequence is DGKEVTSEKAKEAQRRKGLRKD.

The protein belongs to the UPF0291 family.

It is found in the cytoplasm. This is UPF0291 protein LJ_1507 from Lactobacillus johnsonii (strain CNCM I-12250 / La1 / NCC 533).